We begin with the raw amino-acid sequence, 290 residues long: MRIADYSVTRAILERHGFTFKKSFGQNFLTDTNILQKIVDTAEIDKNVNVIEIGPGIGALTEFLAENAAEVMAFEIDDRLVPILADTLRDFDNVTVVNQDILKVDLAQYIAEFKNPDLPIKVVANLPYYITTPILMHLIESGIPFSEFVVMMQKEVADRISAQPNTKAYGSLSIAVQYYMTAKVAFIVPRTVFVPAPNVDSAILKMVRREQPAVEVQDEKFFFKVTKASFVHRRKTLWNNLTSYFGKSEEVKEKLENALAKANLVANVRGEALDLVAFARLSDALKSEGL.

Residues Asn-27, Leu-29, Gly-54, Glu-75, Asp-100, and Asn-125 each contribute to the S-adenosyl-L-methionine site.

The protein belongs to the class I-like SAM-binding methyltransferase superfamily. rRNA adenine N(6)-methyltransferase family. RsmA subfamily.

Its subcellular location is the cytoplasm. It carries out the reaction adenosine(1518)/adenosine(1519) in 16S rRNA + 4 S-adenosyl-L-methionine = N(6)-dimethyladenosine(1518)/N(6)-dimethyladenosine(1519) in 16S rRNA + 4 S-adenosyl-L-homocysteine + 4 H(+). Specifically dimethylates two adjacent adenosines (A1518 and A1519) in the loop of a conserved hairpin near the 3'-end of 16S rRNA in the 30S particle. May play a critical role in biogenesis of 30S subunits. The protein is Ribosomal RNA small subunit methyltransferase A of Streptococcus gordonii (strain Challis / ATCC 35105 / BCRC 15272 / CH1 / DL1 / V288).